The chain runs to 79 residues: D-alanyl carrier protein (79 aa).

The Carrier domain maps to 1–77; sequence MDVKAEVIEI…KIVEGVTELR (77 aa). Position 35 is an O-(pantetheine 4'-phosphoryl)serine (S35).

This sequence belongs to the DltC family. 4'-phosphopantetheine is transferred from CoA to a specific serine of apo-DCP.

The protein localises to the cytoplasm. It functions in the pathway cell wall biogenesis; lipoteichoic acid biosynthesis. Its function is as follows. Carrier protein involved in the D-alanylation of lipoteichoic acid (LTA). The loading of thioester-linked D-alanine onto DltC is catalyzed by D-alanine--D-alanyl carrier protein ligase DltA. The DltC-carried D-alanyl group is further transferred to cell membrane phosphatidylglycerol (PG) by forming an ester bond, probably catalyzed by DltD. D-alanylation of LTA plays an important role in modulating the properties of the cell wall in Gram-positive bacteria, influencing the net charge of the cell wall. In Streptococcus gordonii (strain Challis / ATCC 35105 / BCRC 15272 / CH1 / DL1 / V288), this protein is D-alanyl carrier protein.